The sequence spans 404 residues: LL-diaminopimelate aminotransferase (404 aa).

Tyr-15 and Gly-42 together coordinate substrate. Pyridoxal 5'-phosphate-binding positions include Tyr-72, 108 to 109 (AK), Tyr-132, Asn-188, Tyr-219, and 247 to 249 (SFS). Residues Lys-109, Tyr-132, and Asn-188 each contribute to the substrate site. Lys-250 is modified (N6-(pyridoxal phosphate)lysine). Arg-258 and Asn-288 together coordinate pyridoxal 5'-phosphate. Residues Asn-288 and Arg-384 each contribute to the substrate site.

Belongs to the class-I pyridoxal-phosphate-dependent aminotransferase family. LL-diaminopimelate aminotransferase subfamily. As to quaternary structure, homodimer. Pyridoxal 5'-phosphate serves as cofactor.

The enzyme catalyses (2S,6S)-2,6-diaminopimelate + 2-oxoglutarate = (S)-2,3,4,5-tetrahydrodipicolinate + L-glutamate + H2O + H(+). It functions in the pathway amino-acid biosynthesis; L-lysine biosynthesis via DAP pathway; LL-2,6-diaminopimelate from (S)-tetrahydrodipicolinate (aminotransferase route): step 1/1. Its function is as follows. Involved in the synthesis of meso-diaminopimelate (m-DAP or DL-DAP), required for both lysine and peptidoglycan biosynthesis. Catalyzes the direct conversion of tetrahydrodipicolinate to LL-diaminopimelate. In Agathobacter rectalis (strain ATCC 33656 / DSM 3377 / JCM 17463 / KCTC 5835 / VPI 0990) (Eubacterium rectale), this protein is LL-diaminopimelate aminotransferase.